The following is a 418-amino-acid chain: Deubiquitinase and deneddylase Dub1 (418 aa).

A compositionally biased stretch (polar residues) spans 1–10 (MLSPTNSTSK). The disordered stretch occupies residues 1–23 (MLSPTNSTSKKAPVPPQDSSKPV). Residues 40–60 (TALAVLLVVVTLGLILLFYSF) form a helical membrane-spanning segment. Residues 72 to 143 (TRPSTKEQPT…PPLPPKAPKP (72 aa)) are disordered. Residues 86 to 141 (VPLPSPPLAVPRPSTPPPPVISRPSTPPAPTPAISPPSTPSAPKPSTPPPLPPKAP) are compositionally biased toward pro residues. Catalysis depends on residues His288, Asp305, and Cys358.

Belongs to the peptidase C48 family.

It is found in the secreted. It localises to the host cell. Its subcellular location is the membrane. In terms of biological role, effector proteins function to alter host cell physiology and promote bacterial survival in host tissues. This protease possesses deubiquitinating and deneddylating activities. The sequence is that of Deubiquitinase and deneddylase Dub1 (cdu1) from Chlamydia trachomatis serovar D (strain ATCC VR-885 / DSM 19411 / UW-3/Cx).